Consider the following 195-residue polypeptide: HTH-type transcriptional regulator BetI (195 aa).

In terms of domain architecture, HTH tetR-type spans 8–68 (PIRRQQLIEA…ATMRYLISHL (61 aa)). Positions 31-50 (SIVQIARRAGVSNGIISHYF) form a DNA-binding region, H-T-H motif.

Its pathway is amine and polyamine biosynthesis; betaine biosynthesis via choline pathway [regulation]. In terms of biological role, repressor involved in the biosynthesis of the osmoprotectant glycine betaine. It represses transcription of the choline transporter BetT and the genes of BetAB involved in the synthesis of glycine betaine. The sequence is that of HTH-type transcriptional regulator BetI from Pectobacterium atrosepticum (strain SCRI 1043 / ATCC BAA-672) (Erwinia carotovora subsp. atroseptica).